The sequence spans 198 residues: Transcription factor BHLH133 (198 aa).

Residues 114-127 form a basic motif; degenerate region; it reads SAESSQSYYAKNRR. The bHLH domain maps to 114–163; sequence SAESSQSYYAKNRRQRINERLRILQELIPNGTKVDISTMLEEAIQYVKFL. The segment at 128–163 is helix-loop-helix motif; the sequence is QRINERLRILQELIPNGTKVDISTMLEEAIQYVKFL.

Belongs to the bHLH protein family.

It is found in the nucleus. Its function is as follows. Transcription factor that acts as a regulator of iron homeostasis. May act as negative regulator of iron transportation from root to shoot. Does not seem to be involved in the suppression of the induction of iron deficiency responsive genes. The polypeptide is Transcription factor BHLH133 (Oryza sativa subsp. japonica (Rice)).